The following is a 121-amino-acid chain: Large ribosomal subunit protein uL14 (121 aa).

The protein belongs to the universal ribosomal protein uL14 family. As to quaternary structure, part of the 50S ribosomal subunit. Forms a cluster with proteins L3 and L19. In the 70S ribosome, L14 and L19 interact and together make contacts with the 16S rRNA in bridges B5 and B8.

In terms of biological role, binds to 23S rRNA. Forms part of two intersubunit bridges in the 70S ribosome. This Opitutus terrae (strain DSM 11246 / JCM 15787 / PB90-1) protein is Large ribosomal subunit protein uL14.